Here is a 390-residue protein sequence, read N- to C-terminus: MSVYNPNDADFAFTLGIEEEYQIVDPETRELRSYITQILEPGRTILREQIKPEMHQSIVEVGTRPCRTISEARAEIVRLRSAIAGLAARHNLRIVAAGTHPFSSWMQQEITPDERYHMVVGEMQDAALQLLIFGMHCHIGMPNNEVAIELMNVARYICPHLLALSTSSPFWMGRNTGFKSYRSVIFSTFPRTGIPPTFHSASEFERYVQLLVNTGCIDNGKKIWWDLRPHPFFGTLEFRVCDIATKVEECLALAATMQALIVKFYTMFEENTTFRVYRRALINENKWRAQRWGLDGKLIDFGKRKEVEAKALVHEIVELVDDVVDMLGSRREVEYLLKIVENGTSADRQLRVFAETNDLKAVVDNLMVETMEGVPAMAFEADVQSQAAHS.

It belongs to the glutamate--cysteine ligase type 2 family. YbdK subfamily.

The catalysed reaction is L-cysteine + L-glutamate + ATP = gamma-L-glutamyl-L-cysteine + ADP + phosphate + H(+). In terms of biological role, ATP-dependent carboxylate-amine ligase which exhibits weak glutamate--cysteine ligase activity. The chain is Putative glutamate--cysteine ligase 2 from Chloroflexus aurantiacus (strain ATCC 29366 / DSM 635 / J-10-fl).